A 953-amino-acid polypeptide reads, in one-letter code: MKSAKAKTVRKPVIKKGSQTNLKDPVGVYCRVRPLSFPDQECCVEVINSTTLQLHTPEGYRLNRNGDYKETQYSFKRVFGTHTTQKELFDVVANPLVDDLIHGKNGLLFTYGVTGSGKTYTMTGSPGSGGLLPRCLNMIFNSIGSFQAKRYVFKSNDRNSMEIQCEVDALLERQKREALPIPKTPSSKRQADPEFADMINVQEFCKAEEVDEDSVYGVFVSYIEIYNNYIYDLLEEVQFDPIKPKLPQSKTLREDKNHNMYVAGCTEVEVKSTEEAFEVFWRGQKKRRIANTHLNRESSRSHSVFSIKLVQAPLDADGDNVLQEKEQITISQLSLVDLAGSERTNRTKAEGNRLREAGNINQSLMTLRTCMEVLRENQTYGTNKMVPYRDSKLTHLFKNYFDGEGKVRMIVCVNPKAEDYEESLQVMRFAEVTQEVEVARPVDKVICGLTPGRRYRNLPRGGPVGDEPLVPEVILQSFPPLPPCKLLDINDEETLPKLADTLEKRHHLRQLMTEDLNKKCLAFKALLKEFDNSLSNKENYVQEKLNEREKVISGQKLEIERLEKKNKTLEYKIEILEKTTTIYEEDKRNLQQELESQNQKLQRQFSDKRRLEARLQGMVTETSMKWQKECERRVAATQLEMQNKLWVKDEKLKQLKAIVTEPKPEKPERPSRERDREKIIPRSVSPSPLPLSSNNIAQISNGQQLMSQPQLHRRSNSCSSISVASCISEWEQKLSPFSTPVNVTSLARHRQQEPGQSKTCIVSDRRRGMCWTEGREMVPTFSSEIGVEEDHCRRNTPIPVRHRRSRSAGSRWVDHKPASNVQTETVMQPHVPHAITVSVANEKALAKCEKYMLTHQELASDGEIQTKVIKGDVYKTRGGGQSVQFTDIETLKQELPTGSRKRRSSTLAPAQPDGTESEWTDVETRCSVAVEMRAGSQLGPGYQHHAQPKRKKP.

Positions 7–11 (KTVRK) match the Nuclear localization signal motif. One can recognise a Kinesin motor domain in the interval 25 to 436 (PVGVYCRVRP…MRFAEVTQEV (412 aa)). An ATP-binding site is contributed by 112-119 (GVTGSGKT). Residues S155 and S160 each carry the phosphoserine modification. Residues 542–618 (QEKLNEREKV…RRLEARLQGM (77 aa)) are a coiled coil. Glycyl lysine isopeptide (Lys-Gly) (interchain with G-Cter in SUMO2) cross-links involve residues K572 and K587. S606 is subject to Phosphoserine. Residues K625, K648, K663, and K666 each participate in a glycyl lysine isopeptide (Lys-Gly) (interchain with G-Cter in SUMO2) cross-link. The disordered stretch occupies residues 658–695 (IVTEPKPEKPERPSRERDREKIIPRSVSPSPLPLSSNN). A compositionally biased stretch (basic and acidic residues) spans 662-680 (PKPEKPERPSRERDREKII). Over residues 681 to 693 (PRSVSPSPLPLSS) the composition is skewed to low complexity. Phosphoserine occurs at positions 683 and 685. T739 carries the post-translational modification Phosphothreonine. Residue S807 is modified to Phosphoserine. Residues K816 and K847 each participate in a glycyl lysine isopeptide (Lys-Gly) (interchain with G-Cter in SUMO2) cross-link. S860 carries the post-translational modification Phosphoserine. Residues K867, K870, and K892 each participate in a glycyl lysine isopeptide (Lys-Gly) (interchain with G-Cter in SUMO2) cross-link. 2 disordered regions span residues 894–921 (ELPT…EWTD) and 934–953 (AGSQ…RKKP). S904 carries the post-translational modification Phosphoserine. T920 is subject to Phosphothreonine. Residue K949 forms a Glycyl lysine isopeptide (Lys-Gly) (interchain with G-Cter in SUMO2) linkage.

This sequence belongs to the TRAFAC class myosin-kinesin ATPase superfamily. Kinesin family. Heterotetramer of two molecules each of RACGAP1 and KIF23. Found in the centralspindlin complex. Interacts with RACGAP1; the interaction is direct. Interacts with ECT2 and PRC1. Interacts with ANXA11 during cytokinesis. Interacts with BIRC6/bruce and USP8/UBPY. Interacts with ARF6, forming heterodimers and heterotetramers. In terms of processing, ubiquitinated. Deubiquitinated by USP8/UBPY. In terms of tissue distribution, detected in testis and ovary from newborn mice (at protein level). Detected in brain, spinal cord and small intestine.

It is found in the nucleus. Its subcellular location is the cytoplasm. The protein resides in the cytoskeleton. The protein localises to the spindle. It localises to the midbody. It is found in the midbody ring. Its function is as follows. Component of the centralspindlin complex that serves as a microtubule-dependent and Rho-mediated signaling required for the myosin contractile ring formation during the cell cycle cytokinesis. Essential for cytokinesis in Rho-mediated signaling. Required for the localization of ECT2 to the central spindle. Plus-end-directed motor enzyme that moves antiparallel microtubules in vitro. This Mus musculus (Mouse) protein is Kinesin-like protein KIF23 (Kif23).